A 264-amino-acid chain; its full sequence is 1-(5-phosphoribosyl)-5-[(5-phosphoribosylamino)methylideneamino] imidazole-4-carboxamide isomerase (264 aa).

Belongs to the HisA/HisF family.

It localises to the cytoplasm. The enzyme catalyses 1-(5-phospho-beta-D-ribosyl)-5-[(5-phospho-beta-D-ribosylamino)methylideneamino]imidazole-4-carboxamide = 5-[(5-phospho-1-deoxy-D-ribulos-1-ylimino)methylamino]-1-(5-phospho-beta-D-ribosyl)imidazole-4-carboxamide. Its pathway is amino-acid biosynthesis; L-histidine biosynthesis; L-histidine from 5-phospho-alpha-D-ribose 1-diphosphate: step 4/9. In Yarrowia lipolytica (strain CLIB 122 / E 150) (Yeast), this protein is 1-(5-phosphoribosyl)-5-[(5-phosphoribosylamino)methylideneamino] imidazole-4-carboxamide isomerase (HIS6).